The primary structure comprises 181 residues: Protein Syd (181 aa).

The protein belongs to the Syd family.

The protein resides in the cell inner membrane. Functionally, interacts with the SecY protein in vivo. May bind preferentially to an uncomplexed state of SecY, thus functioning either as a chelating agent for excess SecY in the cell or as a regulatory factor that negatively controls the translocase function. The sequence is that of Protein Syd from Escherichia coli O81 (strain ED1a).